Reading from the N-terminus, the 125-residue chain is Small ribosomal subunit protein uS12 (125 aa).

D89 bears the 3-methylthioaspartic acid mark. The tract at residues 104–125 (TAGVKDRSQSRSKYGAKASKQD) is disordered.

This sequence belongs to the universal ribosomal protein uS12 family. Part of the 30S ribosomal subunit. Contacts proteins S8 and S17. May interact with IF1 in the 30S initiation complex.

Functionally, with S4 and S5 plays an important role in translational accuracy. Interacts with and stabilizes bases of the 16S rRNA that are involved in tRNA selection in the A site and with the mRNA backbone. Located at the interface of the 30S and 50S subunits, it traverses the body of the 30S subunit contacting proteins on the other side and probably holding the rRNA structure together. The combined cluster of proteins S8, S12 and S17 appears to hold together the shoulder and platform of the 30S subunit. This chain is Small ribosomal subunit protein uS12, found in Prochlorococcus marinus (strain MIT 9303).